Reading from the N-terminus, the 57-residue chain is Large ribosomal subunit protein eL20 (57 aa).

Over residues 1–10 the composition is skewed to polar residues; the sequence is MSEFTVTGTF. The tract at residues 1–21 is disordered; it reads MSEFTVTGTFESRDGNQPFEK.

It belongs to the eukaryotic ribosomal protein eL20 family. As to quaternary structure, part of the 50S ribosomal subunit. Binds 23S rRNA.

The protein is Large ribosomal subunit protein eL20 of Halomicrobium mukohataei (strain ATCC 700874 / DSM 12286 / JCM 9738 / NCIMB 13541) (Haloarcula mukohataei).